Consider the following 71-residue polypeptide: Small ribosomal subunit protein bS18 (71 aa).

This sequence belongs to the bacterial ribosomal protein bS18 family. In terms of assembly, part of the 30S ribosomal subunit. Forms a tight heterodimer with protein bS6.

Binds as a heterodimer with protein bS6 to the central domain of the 16S rRNA, where it helps stabilize the platform of the 30S subunit. The protein is Small ribosomal subunit protein bS18 of Synechocystis sp. (strain ATCC 27184 / PCC 6803 / Kazusa).